Reading from the N-terminus, the 85-residue chain is UPF0335 protein Atu3758 (85 aa).

This sequence belongs to the UPF0335 family.

The chain is UPF0335 protein Atu3758 from Agrobacterium fabrum (strain C58 / ATCC 33970) (Agrobacterium tumefaciens (strain C58)).